The chain runs to 266 residues: Undecaprenyl-diphosphatase (266 aa).

The next 8 membrane-spanning stretches (helical) occupy residues 1-21 (MDTL…FLPI), 39-59 (QGLS…VIYF), 83-103 (SKLA…GFTA), 111-131 (LRGP…LWFA), 149-169 (ALLI…RSGI), 183-203 (AAAR…ALLM), 218-238 (ALAL…YFFL), and 246-266 (MTPF…FIYL).

Belongs to the UppP family.

It localises to the cell inner membrane. It carries out the reaction di-trans,octa-cis-undecaprenyl diphosphate + H2O = di-trans,octa-cis-undecaprenyl phosphate + phosphate + H(+). Functionally, catalyzes the dephosphorylation of undecaprenyl diphosphate (UPP). Confers resistance to bacitracin. The polypeptide is Undecaprenyl-diphosphatase (Shewanella amazonensis (strain ATCC BAA-1098 / SB2B)).